Here is a 21-residue protein sequence, read N- to C-terminus: Putative pancreatic polypeptide 2 (21 aa).

Belongs to the NPY family.

The chain is Putative pancreatic polypeptide 2 (PPY2P) from Homo sapiens (Human).